Consider the following 510-residue polypeptide: Glucose-6-phosphate 1-dehydrogenase (510 aa).

NADP(+)-binding positions include 29–36 (GASGDLAK), Arg-63, and Lys-164. D-glucose 6-phosphate-binding positions include Lys-164, 194-198 (HYLGK), Glu-232, and Asp-251. Catalysis depends on His-256, which acts as the Proton acceptor. Lys-347 contacts NADP(+). Residue Lys-350 participates in D-glucose 6-phosphate binding. Residues Lys-356, Arg-360, and Arg-382 each contribute to the NADP(+) site. D-glucose 6-phosphate is bound at residue Gln-384. Residues 390–392 (YIK), 410–412 (DLT), and Arg-477 each bind NADP(+).

This sequence belongs to the glucose-6-phosphate dehydrogenase family.

It catalyses the reaction D-glucose 6-phosphate + NADP(+) = 6-phospho-D-glucono-1,5-lactone + NADPH + H(+). The protein operates within carbohydrate degradation; pentose phosphate pathway; D-ribulose 5-phosphate from D-glucose 6-phosphate (oxidative stage): step 1/3. Functionally, catalyzes the rate-limiting step of the oxidative pentose-phosphate pathway, which represents a route for the dissimilation of carbohydrates besides glycolysis. The main function of this enzyme is to provide reducing power (NADPH) and pentose phosphates for fatty acid and nucleic acid synthesis. In Aspergillus niger, this protein is Glucose-6-phosphate 1-dehydrogenase (gsdA).